Consider the following 150-residue polypeptide: Large ribosomal subunit protein bL9 (150 aa).

It belongs to the bacterial ribosomal protein bL9 family.

Its function is as follows. Binds to the 23S rRNA. The chain is Large ribosomal subunit protein bL9 from Shewanella oneidensis (strain ATCC 700550 / JCM 31522 / CIP 106686 / LMG 19005 / NCIMB 14063 / MR-1).